The chain runs to 117 residues: Ribonuclease P protein component 4 (117 aa).

Residues Cys63, Cys66, Cys92, and Cys95 each contribute to the Zn(2+) site.

This sequence belongs to the eukaryotic/archaeal RNase P protein component 4 family. Consists of a catalytic RNA component and at least 4 protein subunits. Forms a subcomplex with Rnp1 which stimulates the catalytic RNA. Zn(2+) is required as a cofactor.

It is found in the cytoplasm. The enzyme catalyses Endonucleolytic cleavage of RNA, removing 5'-extranucleotides from tRNA precursor.. In terms of biological role, part of ribonuclease P, a protein complex that generates mature tRNA molecules by cleaving their 5'-ends. The RNA is catalytic, but its KM for pre-tRNA is 170-fold decreased in the presence of the 4 known protein subunits (Rnp1-4). The protein subunits also decrease the amount of Mg(2+) needed for activity. The chain is Ribonuclease P protein component 4 from Pyrococcus furiosus (strain ATCC 43587 / DSM 3638 / JCM 8422 / Vc1).